The primary structure comprises 165 residues: Large ribosomal subunit protein uL30 (165 aa).

This sequence belongs to the universal ribosomal protein uL30 family. Part of the 50S ribosomal subunit.

In Thermoplasma volcanium (strain ATCC 51530 / DSM 4299 / JCM 9571 / NBRC 15438 / GSS1), this protein is Large ribosomal subunit protein uL30.